Here is a 135-residue protein sequence, read N- to C-terminus: ATP synthase epsilon chain (135 aa).

This sequence belongs to the ATPase epsilon chain family. In terms of assembly, F-type ATPases have 2 components, CF(1) - the catalytic core - and CF(0) - the membrane proton channel. CF(1) has five subunits: alpha(3), beta(3), gamma(1), delta(1), epsilon(1). CF(0) has three main subunits: a, b and c.

Its subcellular location is the cell inner membrane. In terms of biological role, produces ATP from ADP in the presence of a proton gradient across the membrane. The protein is ATP synthase epsilon chain of Rhizobium johnstonii (strain DSM 114642 / LMG 32736 / 3841) (Rhizobium leguminosarum bv. viciae).